The sequence spans 714 residues: Polyribonucleotide nucleotidyltransferase (714 aa).

Residues Asp490 and Asp496 each contribute to the Mg(2+) site. Residues 556–615 (PRIETMQIPTDKIREVIGSGGKVIREIVEVSGAKVDINDDGIIKIASPNGDSIKKAYDMI) enclose the KH domain. Residues 625-693 (GQVYTGKVVK…DRGKVRLSMK (69 aa)) form the S1 motif domain.

The protein belongs to the polyribonucleotide nucleotidyltransferase family. Requires Mg(2+) as cofactor.

The protein localises to the cytoplasm. The enzyme catalyses RNA(n+1) + phosphate = RNA(n) + a ribonucleoside 5'-diphosphate. Functionally, involved in mRNA degradation. Catalyzes the phosphorolysis of single-stranded polyribonucleotides processively in the 3'- to 5'-direction. The polypeptide is Polyribonucleotide nucleotidyltransferase (Ruegeria pomeroyi (strain ATCC 700808 / DSM 15171 / DSS-3) (Silicibacter pomeroyi)).